The chain runs to 720 residues: MNGIMTTSSHSNFYNQDLVGAPSSSDHIPGPSSQDQPTNNNSPQHHHQHDQSQTTHQNHPLNQPIHHHPTQQNQSESQQSRQSHHLQQQQQQQQQQQQNQHNQQNLASSSTSYEMPSIYQQFTGSYQQTRVPKNFLLENANYYTLQPGFPLVQAADYYSTPTTTSANDYQNSTINSIISPSFQMGSVSTPDTQNSSIRSKQQQQHSYQQQQPQQLSQSQHQSQVPDIFYTQGGTIGGYVTTKQQQKEFSRKTSGDQTLVPQTNSKLQQQISETSYSQQQQQQQSPPTPQKQQQQQHYQHQTTQPYGGTGFMLYSQTGGPSSSPVAGNISIPTTIATTGQPNSQFQFTYGSPQQGSSSKTNQMYLYQRQQQQQQQHQQPQSQQMSQISQLSQQIPPQGSSKNISINSTPTKSRASSITTRSGRQSRSTSISSFIPQPDYPERVIRPKVATTRWDDENTNCYQVRARNILVSRREDTNYINGTKLLNVIGMTRGKRDGILKTEKIKNVVKVGSMNLKGVWIPFDRAYEIARNEGVDSLLYPLFVKNIKQYFLTKGHKLKSEDDEQEILEEGMTRQREEVRREGRSNGVGDFHNEEEEEIVGIQEDAGPNTAENDVPGDDEEEEDDDDDDDDDEEEGEQDDEEEEDGSSTSMSSSKNSESKLLETRDVIKSIVEEGDSTTGNVSEVKYVHEYLERSPQSTAIKEEDLYYGSSHNTPLTVHKTL.

Polar residues-rich tracts occupy residues 1–15 (MNGI…NFYN) and 22–35 (PSSS…SSQD). Disordered stretches follow at residues 1-111 (MNGI…SSST), 181-223 (SFQM…HQSQ), 245-336 (QKEF…TIAT), and 365-437 (YQRQ…PQPD). A compositionally biased stretch (low complexity) spans 71-105 (QQNQSESQQSRQSHHLQQQQQQQQQQQQNQHNQQN). The span at 181 to 200 (SFQMGSVSTPDTQNSSIRSK) shows a compositional bias: polar residues. A compositionally biased stretch (low complexity) spans 201–223 (QQQQHSYQQQQPQQLSQSQHQSQ). Polar residues predominate over residues 254–266 (GDQTLVPQTNSKL). The span at 267–304 (QQQISETSYSQQQQQQQSPPTPQKQQQQQHYQHQTTQP) shows a compositional bias: low complexity. Polar residues predominate over residues 313–336 (YSQTGGPSSSPVAGNISIPTTIAT). Residues 366–399 (QRQQQQQQQHQQPQSQQMSQISQLSQQIPPQGSS) show a composition bias toward low complexity. Polar residues predominate over residues 400 to 413 (KNISINSTPTKSRA). The segment covering 414 to 433 (SSITTRSGRQSRSTSISSFI) has biased composition (low complexity). In terms of domain architecture, HTH APSES-type spans 446–552 (KVATTRWDDE…KNIKQYFLTK (107 aa)). Positions 480–501 (GTKLLNVIGMTRGKRDGILKTE) form a DNA-binding region, H-T-H motif. Positions 569-582 (GMTRQREEVRREGR) are enriched in basic and acidic residues. Positions 569 to 662 (GMTRQREEVR…KNSESKLLET (94 aa)) are disordered. The span at 613–644 (VPGDDEEEEDDDDDDDDDEEEGEQDDEEEEDG) shows a compositional bias: acidic residues. Over residues 645–654 (SSTSMSSSKN) the composition is skewed to low complexity.

This sequence belongs to the EFG1/PHD1/stuA family.

The protein resides in the nucleus. Its function is as follows. Transcription factor that regulates filamentous growth through repression of EFG1. Regulates the level of colonizing fungi, favoring commensalism as opposed to candidiasis. This chain is Transcriptional regulator EFH1 (EFH1), found in Candida albicans (strain SC5314 / ATCC MYA-2876) (Yeast).